A 405-amino-acid polypeptide reads, in one-letter code: Tryptophan synthase beta chain (405 aa).

Lysine 95 is subject to N6-(pyridoxal phosphate)lysine.

It belongs to the TrpB family. As to quaternary structure, tetramer of two alpha and two beta chains. Pyridoxal 5'-phosphate is required as a cofactor.

It catalyses the reaction (1S,2R)-1-C-(indol-3-yl)glycerol 3-phosphate + L-serine = D-glyceraldehyde 3-phosphate + L-tryptophan + H2O. Its pathway is amino-acid biosynthesis; L-tryptophan biosynthesis; L-tryptophan from chorismate: step 5/5. Functionally, the beta subunit is responsible for the synthesis of L-tryptophan from indole and L-serine. The chain is Tryptophan synthase beta chain from Pseudomonas putida (strain ATCC 700007 / DSM 6899 / JCM 31910 / BCRC 17059 / LMG 24140 / F1).